A 793-amino-acid chain; its full sequence is Protocadherin beta-7 (793 aa).

Residues 1-26 (MEARVERAVQKRQVLFLCVFLGMSWA) form the signal peptide. The Extracellular portion of the chain corresponds to 27–688 (GAEPLRYFVA…DQANLLTVYL (662 aa)). 5 Cadherin domains span residues 35-133 (VAEE…APVF), 138-242 (ISLK…APDF), 247-347 (YKVQ…RPEL), 352-451 (LTSP…APAF), and 456-561 (YTLF…SPFV). A glycan (N-linked (GlcNAc...) asparagine) is linked at Asn169. N-linked (GlcNAc...) asparagine glycosylation is found at Asn418 and Asn436. A glycan (N-linked (GlcNAc...) asparagine) is linked at Asn567. The 104-residue stretch at 568–671 (SSAPCTEPLP…LVDGFSQPYL (104 aa)) folds into the Cadherin 6 domain. The chain crosses the membrane as a helical span at residues 689-709 (VVALASVSSLFLLSVLLFVAV). Over 710–793 (RLCRRSRAAP…NRPFQNNLGF (84 aa)) the chain is Cytoplasmic.

The protein resides in the cell membrane. Functionally, potential calcium-dependent cell-adhesion protein. May be involved in the establishment and maintenance of specific neuronal connections in the brain. The chain is Protocadherin beta-7 (PCDHB7) from Pan troglodytes (Chimpanzee).